The chain runs to 352 residues: MKVLGIESSCDETGVAVYDTELSGVPALRAHAVYSQIALHAEYGGVVPELASRDHVRKLLPLIRQTLGEAGLRIDELDGVAYTAGPGLVGALLVGAGVARSLAWALDVPAIGVHHMEGHLLAPLMEDDPPQAPFVALLVSGGHTQLVSVKALGSYQVLGETLDDAAGEAFDKTAKMMGLPYPGGPQLAALAETGTPGRYKFARPMTDRPGLDFSFSGLKTQVLLAWRSSDQSDTTRADIARGFEDAVVDTLAIKCLRALDAAGCDTLVVAGGVGANKRLRARLQEAAQRRGGRVCFPRPALCTDNGAMIAFAGALRLQAGEHADAAVHVTPRWDMAALPPLAAQESGVGNRE.

Fe cation-binding residues include His-115 and His-119. Substrate is bound by residues 138–142 (LVSGG), Asp-171, Gly-184, and Asn-276. A Fe cation-binding site is contributed by Asp-304.

Belongs to the KAE1 / TsaD family. The cofactor is Fe(2+).

It is found in the cytoplasm. It carries out the reaction L-threonylcarbamoyladenylate + adenosine(37) in tRNA = N(6)-L-threonylcarbamoyladenosine(37) in tRNA + AMP + H(+). Required for the formation of a threonylcarbamoyl group on adenosine at position 37 (t(6)A37) in tRNAs that read codons beginning with adenine. Is involved in the transfer of the threonylcarbamoyl moiety of threonylcarbamoyl-AMP (TC-AMP) to the N6 group of A37, together with TsaE and TsaB. TsaD likely plays a direct catalytic role in this reaction. The protein is tRNA N6-adenosine threonylcarbamoyltransferase of Xanthomonas axonopodis pv. citri (strain 306).